The sequence spans 503 residues: ATP synthase subunit alpha (503 aa).

An ATP-binding site is contributed by 169-176 (GDRQTGKT).

Belongs to the ATPase alpha/beta chains family. F-type ATPases have 2 components, CF(1) - the catalytic core - and CF(0) - the membrane proton channel. CF(1) has five subunits: alpha(3), beta(3), gamma(1), delta(1), epsilon(1). CF(0) has three main subunits: a(1), b(2) and c(9-12). The alpha and beta chains form an alternating ring which encloses part of the gamma chain. CF(1) is attached to CF(0) by a central stalk formed by the gamma and epsilon chains, while a peripheral stalk is formed by the delta and b chains.

The protein resides in the cell membrane. It carries out the reaction ATP + H2O + 4 H(+)(in) = ADP + phosphate + 5 H(+)(out). Functionally, produces ATP from ADP in the presence of a proton gradient across the membrane. The alpha chain is a regulatory subunit. This Staphylococcus epidermidis (strain ATCC 35984 / DSM 28319 / BCRC 17069 / CCUG 31568 / BM 3577 / RP62A) protein is ATP synthase subunit alpha.